The sequence spans 431 residues: tRNA (adenine(37)-N6)-methyltransferase (431 aa).

Positions 30–168 (TEPIGYLESC…YIADYDSPQN (139 aa)) constitute a TsaA-like domain. S-adenosyl-L-methionine-binding positions include 47–49 (PRQ), 90–91 (HK), Arg117, Leu127, and 148–151 (IDGT). The interval 196-242 (LSGRGKVQPRQSTKERPKCLEDRTSGENSQKSRDMSEIQHTLPEDRE) is disordered. Basic and acidic residues predominate over residues 207–242 (STKERPKCLEDRTSGENSQKSRDMSEIQHTLPEDRE).

It belongs to the tRNA methyltransferase O family.

The catalysed reaction is N(6)-L-threonylcarbamoyladenosine(37) in tRNA + S-adenosyl-L-methionine = N(6)-methyl,N(6)-L-threonylcarbamoyladenosine(37) in tRNA + S-adenosyl-L-homocysteine + H(+). In terms of biological role, S-adenosyl-L-methionine-dependent methyltransferase responsible for the addition of the methyl group in the formation of N6-methyl-N6-threonylcarbamoyladenosine at position 37 (m(6)t(6)A37) of the tRNA anticodon loop of tRNA(Ser)(GCU). The methyl group of m(6)t(6)A37 may improve the efficiency of the tRNA decoding ability. May bind to tRNA. The chain is tRNA (adenine(37)-N6)-methyltransferase from Mus musculus (Mouse).